A 108-amino-acid chain; its full sequence is Nucleoid-associated protein BamMC406_1737 (108 aa).

A compositionally biased stretch (polar residues) spans 85-95 (ATSQEKMSGMT). Residues 85–108 (ATSQEKMSGMTSGLPLPPGFKLPF) are disordered. Residues 99–108 (PLPPGFKLPF) show a composition bias toward pro residues.

Belongs to the YbaB/EbfC family. Homodimer.

The protein localises to the cytoplasm. It localises to the nucleoid. Binds to DNA and alters its conformation. May be involved in regulation of gene expression, nucleoid organization and DNA protection. The chain is Nucleoid-associated protein BamMC406_1737 from Burkholderia ambifaria (strain MC40-6).